A 258-amino-acid polypeptide reads, in one-letter code: Small ribosomal subunit protein uS2 (258 aa).

Belongs to the universal ribosomal protein uS2 family.

This is Small ribosomal subunit protein uS2 from Streptococcus suis (strain 05ZYH33).